The chain runs to 206 residues: ATP synthase subunit b (206 aa).

A helical transmembrane segment spans residues 10-30 (LLKPFVSTAAICLLVAGTVVL).

The protein belongs to the ATPase B chain family. As to quaternary structure, F-type ATPases have 2 components, F(1) - the catalytic core - and F(0) - the membrane proton channel. F(1) has five subunits: alpha(3), beta(3), gamma(1), delta(1), epsilon(1). F(0) has three main subunits: a(1), b(2) and c(10-14). The alpha and beta chains form an alternating ring which encloses part of the gamma chain. F(1) is attached to F(0) by a central stalk formed by the gamma and epsilon chains, while a peripheral stalk is formed by the delta and b chains.

The protein localises to the cell inner membrane. In terms of biological role, f(1)F(0) ATP synthase produces ATP from ADP in the presence of a proton or sodium gradient. F-type ATPases consist of two structural domains, F(1) containing the extramembraneous catalytic core and F(0) containing the membrane proton channel, linked together by a central stalk and a peripheral stalk. During catalysis, ATP synthesis in the catalytic domain of F(1) is coupled via a rotary mechanism of the central stalk subunits to proton translocation. Functionally, component of the F(0) channel, it forms part of the peripheral stalk, linking F(1) to F(0). The protein is ATP synthase subunit b of Geobacter sulfurreducens (strain ATCC 51573 / DSM 12127 / PCA).